Consider the following 257-residue polypeptide: Putative hydro-lyase BceJ2315_40370 (257 aa).

The protein belongs to the D-glutamate cyclase family.

The chain is Putative hydro-lyase BceJ2315_40370 from Burkholderia cenocepacia (strain ATCC BAA-245 / DSM 16553 / LMG 16656 / NCTC 13227 / J2315 / CF5610) (Burkholderia cepacia (strain J2315)).